Here is a 459-residue protein sequence, read N- to C-terminus: tRNA modification GTPase MnmE (459 aa).

(6S)-5-formyl-5,6,7,8-tetrahydrofolate contacts are provided by R22, E85, and R124. The 160-residue stretch at 221–380 (GLSTVIVGKP…LELQIRDLFF (160 aa)) folds into the TrmE-type G domain. A K(+)-binding site is contributed by N231. Residues 231–236 (NVGKSS), 250–256 (TEVAGTT), and 275–278 (DTAG) each bind GTP. S235 contributes to the Mg(2+) binding site. Residues T250, V252, and T255 each coordinate K(+). Residue T256 coordinates Mg(2+). Position 459 (K459) interacts with (6S)-5-formyl-5,6,7,8-tetrahydrofolate.

Belongs to the TRAFAC class TrmE-Era-EngA-EngB-Septin-like GTPase superfamily. TrmE GTPase family. In terms of assembly, homodimer. Heterotetramer of two MnmE and two MnmG subunits. It depends on K(+) as a cofactor.

Its subcellular location is the cytoplasm. In terms of biological role, exhibits a very high intrinsic GTPase hydrolysis rate. Involved in the addition of a carboxymethylaminomethyl (cmnm) group at the wobble position (U34) of certain tRNAs, forming tRNA-cmnm(5)s(2)U34. This chain is tRNA modification GTPase MnmE, found in Staphylococcus haemolyticus (strain JCSC1435).